We begin with the raw amino-acid sequence, 130 residues long: Transcription antitermination protein NusB (130 aa).

This sequence belongs to the NusB family.

In terms of biological role, involved in transcription antitermination. Required for transcription of ribosomal RNA (rRNA) genes. Binds specifically to the boxA antiterminator sequence of the ribosomal RNA (rrn) operons. The sequence is that of Transcription antitermination protein NusB from Bacillus velezensis (strain DSM 23117 / BGSC 10A6 / LMG 26770 / FZB42) (Bacillus amyloliquefaciens subsp. plantarum).